We begin with the raw amino-acid sequence, 693 residues long: Phosphoribosylformylglycinamidine synthase subunit PurL (693 aa).

H34 is an active-site residue. ATP contacts are provided by Y37 and K76. E78 is a binding site for Mg(2+). Residues 79 to 82 and R101 contribute to the substrate site; that span reads SHNH. H80 serves as the catalytic Proton acceptor. D102 provides a ligand contact to Mg(2+). Q222 is a substrate binding site. D248 is a Mg(2+) binding site. 292 to 294 contacts substrate; it reads ETQ. Residues D470 and G507 each coordinate ATP. Substrate is bound at residue S510.

Belongs to the FGAMS family. In terms of assembly, monomer. Part of the FGAM synthase complex composed of 1 PurL, 1 PurQ and 2 PurS subunits.

The protein localises to the cytoplasm. The enzyme catalyses N(2)-formyl-N(1)-(5-phospho-beta-D-ribosyl)glycinamide + L-glutamine + ATP + H2O = 2-formamido-N(1)-(5-O-phospho-beta-D-ribosyl)acetamidine + L-glutamate + ADP + phosphate + H(+). The protein operates within purine metabolism; IMP biosynthesis via de novo pathway; 5-amino-1-(5-phospho-D-ribosyl)imidazole from N(2)-formyl-N(1)-(5-phospho-D-ribosyl)glycinamide: step 1/2. In terms of biological role, part of the phosphoribosylformylglycinamidine synthase complex involved in the purines biosynthetic pathway. Catalyzes the ATP-dependent conversion of formylglycinamide ribonucleotide (FGAR) and glutamine to yield formylglycinamidine ribonucleotide (FGAM) and glutamate. The FGAM synthase complex is composed of three subunits. PurQ produces an ammonia molecule by converting glutamine to glutamate. PurL transfers the ammonia molecule to FGAR to form FGAM in an ATP-dependent manner. PurS interacts with PurQ and PurL and is thought to assist in the transfer of the ammonia molecule from PurQ to PurL. The protein is Phosphoribosylformylglycinamidine synthase subunit PurL of Pyrobaculum neutrophilum (strain DSM 2338 / JCM 9278 / NBRC 100436 / V24Sta) (Thermoproteus neutrophilus).